A 314-amino-acid chain; its full sequence is Putative S-adenosyl-L-methionine-dependent methyltransferase MAP_4191c (314 aa).

Residues aspartate 138 and 167-168 (DL) each bind S-adenosyl-L-methionine.

It belongs to the UPF0677 family.

Its function is as follows. Exhibits S-adenosyl-L-methionine-dependent methyltransferase activity. The protein is Putative S-adenosyl-L-methionine-dependent methyltransferase MAP_4191c of Mycolicibacterium paratuberculosis (strain ATCC BAA-968 / K-10) (Mycobacterium paratuberculosis).